A 238-amino-acid polypeptide reads, in one-letter code: MAFTFKQFHIDDMNCGMAVGTDSVVLGAWAQLTAAKTVLDIGAGSGLLSLMAAQRSQAHITSVELDTSAAEACQHNFHNSPWANRLTLVNSSIQDFCQQIEYQEYFDHIICNPPYFEQGTQAIQSQRAMARHTDSLSFAALLDAIHVCLAPQGNASLILPMQSMARFNEILAHSQLSLIEITNLISIVGKSANRVLCVLAHKTHPQIATKISDITIRELSGQYTQTMVQLIRDFYLKY.

The protein belongs to the methyltransferase superfamily. tRNA (adenine-N(6)-)-methyltransferase family.

The protein resides in the cytoplasm. The enzyme catalyses adenosine(37) in tRNA1(Val) + S-adenosyl-L-methionine = N(6)-methyladenosine(37) in tRNA1(Val) + S-adenosyl-L-homocysteine + H(+). Specifically methylates the adenine in position 37 of tRNA(1)(Val) (anticodon cmo5UAC). In Shewanella baltica (strain OS195), this protein is tRNA1(Val) (adenine(37)-N6)-methyltransferase.